The following is a 445-amino-acid chain: Protein PRRC1 (445 aa).

Disordered stretches follow at residues 1 to 71 (MMEE…PSAP) and 105 to 167 (PPVS…TGLL). A compositionally biased stretch (polar residues) spans 27 to 49 (MSSTPVPLAATSSFSSPNVSSME). The span at 59-71 (PQPPLPPVRPSAP) shows a compositional bias: pro residues. Residues serine 209 and serine 408 each carry the phosphoserine modification.

This sequence belongs to the PRRC1 family. Interacts with PRKAR1A; resulting in PKA activation. Ubiquitously expressed with higher expression in kidney, liver and placenta. Detected in embryonic kidney cells (HEK293 cells) (at protein level). As to expression, specifically expressed in liver.

It is found in the golgi apparatus. Its subcellular location is the cytoplasm. Its function is as follows. May act as a regulator of the protein kinase A (PKA) activity during embryonic development. This chain is Protein PRRC1 (PRRC1), found in Homo sapiens (Human).